The primary structure comprises 692 residues: Furin-like protease kpc-1 (692 aa).

The signal sequence occupies residues 1-33 (MSNISWYRHCSVRLQLVTLALFLLLGSASLGSA). A glycan (N-linked (GlcNAc...) asparagine) is linked at Asn-3. Residues 34 to 139 (HIDEEFEDDV…QQVAKRRVKR (106 aa)) constitute a propeptide that is removed on maturation. Topologically, residues 140–670 (GYRRIRRHTD…RSVQMEATSS (531 aa)) are lumenal. The disordered stretch occupies residues 152–177 (DIFEEDDDGTQISKSRNRKHPDPNDP). Position 176 (Asp-176) interacts with Ca(2+). The Peptidase S8 domain occupies 182 to 503 (MWYLNRGEHH…YGLMDAGAMV (322 aa)). Asp-221 (charge relay system) is an active-site residue. Asp-222 is a substrate binding site. 4 residues coordinate Ca(2+): Asp-230, Asp-242, Asp-247, and Asp-249. Residues 230-249 (DISPNYDERASYDVNDRDND) form a disordered region. 259–260 (EN) provides a ligand contact to substrate. Catalysis depends on His-262, which acts as the Charge relay system. Ile-273 contributes to the Ca(2+) binding site. Asn-275 carries N-linked (GlcNAc...) asparagine glycosylation. Ca(2+) contacts are provided by Asn-276, Leu-278, and Ile-280. Disulfide bonds link Cys-279/Cys-428 and Cys-371/Cys-401. Residues Glu-304, 321–326 (SWGPDD), Asp-332, and 360–363 (ASGN) each bind substrate. A Ca(2+)-binding site is contributed by Asp-326. Asp-369 provides a ligand contact to Ca(2+). The substrate site is built by Asp-374 and Tyr-376. Glu-399 serves as a coordination point for Ca(2+). The active-site Charge relay system is Ser-436. Ser-436 is a substrate binding site. Residues Asn-455 and Asn-487 are each glycosylated (N-linked (GlcNAc...) asparagine). The 135-residue stretch at 512-646 (VDEQHRCRQF…ELVLYGTDRE (135 aa)) folds into the P/Homo B domain. Cys-518 and Cys-544 form a disulfide bridge. A Cell attachment site motif is present at residues 570-572 (RGD). A helical transmembrane segment spans residues 671–692 (GTQYSIFHVITLVILTFSQILY).

The protein belongs to the peptidase S8 family. Furin subfamily. Interacts (via extracellular domain) with receptor dma-1 (via extracellular domain); the interaction promotes dma-1 internalization. Requires Ca(2+) as cofactor. In terms of tissue distribution, expressed in the nervous system including the ventral nerve cord, the nerve ring and the retrovesicular ganglion, and in epithelial cells. Expressed in IL2 neurons. Expressed in PVD mechanosensory neurons. Expressed in pharynx with strong expression in the g2 pharyngeal gland cells and vpi pharyngeal intestinal valve cells. Expressed in intestine.

It localises to the cell membrane. It is found in the perikaryon. Its subcellular location is the cell projection. The protein localises to the axon. Its function is as follows. Furin-like protease which cleaves proproteins at the RX(K/R)R consensus motif. During neuronal development, regulates the formation and extension of dendrite branches and cellular positioning of various type of neurons. Together with chin-1 and cdc-42, plays a role in the development of the neuropil and is required for the guidance of axons from neurons, including SubL pioneer neurons and AIY interneurons, into the nerve ring. Its role in axon guidance in glia and pioneer neurons may be through ensuring the fmi-1 protein is correctly localized to the nerve ring. Promotes the formation, extension and self-avoidance of dendritic branches of PVD and FLP mechanosensory neurons. In PVD neurons, regulates plasma membrane levels of branching receptor dma-1 by targeting it to late endosomes and thus promotes normal dendrite branching and dendrite self-avoidance. Also controls dendrite extension in AIY and D-type motoneurons, dendrite branching in AQR sensory neurons and VC4/5 motoneurons, the normal number of dendritic branches in AVL neurons and the positioning of HSN and ALM/PLM neurons. Dispensable for maintaining dendrite branching in adults. Also regulates dauer-specific dendritic branching of IL2 neurons and dauer-specific nictation behavior. Under adverse environmental conditions, may promote dauer formation by processing insulin-like proteins ins-1 and ins-18, two daf-2/InsR antagonists. This Caenorhabditis elegans protein is Furin-like protease kpc-1.